A 357-amino-acid polypeptide reads, in one-letter code: Peptide chain release factor 1 (357 aa).

Glutamine 234 bears the N5-methylglutamine mark. Positions 282 to 313 (DSKKQEQRSNNRKQQVGSGDRSERIRTYNFPQ) are disordered.

This sequence belongs to the prokaryotic/mitochondrial release factor family. In terms of processing, methylated by PrmC. Methylation increases the termination efficiency of RF1.

It localises to the cytoplasm. Peptide chain release factor 1 directs the termination of translation in response to the peptide chain termination codons UAG and UAA. The polypeptide is Peptide chain release factor 1 (Borreliella afzelii (strain PKo) (Borrelia afzelii)).